Reading from the N-terminus, the 145-residue chain is MMIEIIPKISIPKNGLGSFTRPCRRIEFSYCNWGGSSKGMKEFLSTKLESLAKESQDVEFHVTNRQGKHPLIRAYYNTGREKVICTRKMSASSIFQKAILCRDSDGLKPRLIKYPVESTNPSVRGIWSPFSDQAKPHEIYKKKSP.

Belongs to the mitochondrion-specific ribosomal protein mL43 family. In terms of assembly, component of the mitochondrial large ribosomal subunit (mt-LSU). Mature yeast 74S mitochondrial ribosomes consist of a small (37S) and a large (54S) subunit. The 37S small subunit contains a 15S ribosomal RNA (15S mt-rRNA) and at least 32 different proteins. The 54S large subunit contains a 21S rRNA (21S mt-rRNA) and at least 45 different proteins.

The protein localises to the mitochondrion. Its function is as follows. Component of the mitochondrial ribosome (mitoribosome), a dedicated translation machinery responsible for the synthesis of mitochondrial genome-encoded proteins, including at least some of the essential transmembrane subunits of the mitochondrial respiratory chain. The mitoribosomes are attached to the mitochondrial inner membrane and translation products are cotranslationally integrated into the membrane. Also has an extraribosomal function, being essential for mitochondrial genome integrity. May interact with MHR1 to take part in the mtDNA repair mechanism. The chain is Large ribosomal subunit protein mL43 (mrpl51) from Schizosaccharomyces pombe (strain 972 / ATCC 24843) (Fission yeast).